Consider the following 115-residue polypeptide: Probable non-functional T cell receptor beta variable 23-1 (115 aa).

The N-terminal stretch at 1–21 is a signal peptide; sequence MGTRLLGCAALCLLAADSFHA. Residues 22–115 enclose the Ig-like domain; it reads KVTQTPGHLV…TALYLCASSQ (94 aa). Residues Cys42 and Cys111 are joined by a disulfide bond.

As to quaternary structure, alpha-beta TR is a heterodimer composed of an alpha and beta chain; disulfide-linked. The alpha-beta TR is associated with the transmembrane signaling CD3 coreceptor proteins to form the TR-CD3 (TcR or TCR). The assembly of alpha-beta TR heterodimers with CD3 occurs in the endoplasmic reticulum where a single alpha-beta TR heterodimer associates with one CD3D-CD3E heterodimer, one CD3G-CD3E heterodimer and one CD247 homodimer forming a stable octameric structure. CD3D-CD3E and CD3G-CD3E heterodimers preferentially associate with TR alpha and TR beta chains, respectively. The association of the CD247 homodimer is the last step of TcR assembly in the endoplasmic reticulum and is required for transport to the cell surface.

It is found in the cell membrane. Its function is as follows. Probable non-functional open reading frame (ORF) of V region of the variable domain of T cell receptor (TR) beta chain. Non-functional ORF generally cannot participate in the synthesis of a productive T cell receptor (TR) chain due to altered V-(D)-J or switch recombination and/or splicing site (at mRNA level) and/or conserved amino acid change (protein level). Alpha-beta T cell receptors are antigen specific receptors which are essential to the immune response and are present on the cell surface of T lymphocytes. Recognize peptide-major histocompatibility (MH) (pMH) complexes that are displayed by antigen presenting cells (APC), a prerequisite for efficient T cell adaptive immunity against pathogens. Binding of alpha-beta TR to pMH complex initiates TR-CD3 clustering on the cell surface and intracellular activation of LCK that phosphorylates the ITAM motifs of CD3G, CD3D, CD3E and CD247 enabling the recruitment of ZAP70. In turn ZAP70 phosphorylates LAT, which recruits numerous signaling molecules to form the LAT signalosome. The LAT signalosome propagates signal branching to three major signaling pathways, the calcium, the mitogen-activated protein kinase (MAPK) kinase and the nuclear factor NF-kappa-B (NF-kB) pathways, leading to the mobilization of transcription factors that are critical for gene expression and essential for T cell growth and differentiation. The T cell repertoire is generated in the thymus, by V-(D)-J rearrangement. This repertoire is then shaped by intrathymic selection events to generate a peripheral T cell pool of self-MH restricted, non-autoaggressive T cells. Post-thymic interaction of alpha-beta TR with the pMH complexes shapes TR structural and functional avidity. The polypeptide is Probable non-functional T cell receptor beta variable 23-1 (Homo sapiens (Human)).